The primary structure comprises 258 residues: MIMNSAVSLVILLSLLCEAHTVVLLNPTDSSLPANNFTDTEAALSTPLESADIPKARRKRYISQNDMIAILDYHNQVRGKVFPPAANMEYMVWDENLAKSAEAWAATCIWDHGPSYLLRFLGQNLSVRTGRYRSILQLVKPWYDEVKDYAFPYPQDCNPRCPMRCFGPMCTHYTQMVWATSNRIGCAIHTCQNMNVWGSVWRRAVYLVCNYAPKGNWIGEAPYKVGVPCSSCPPSYGGACTDNLCFPGVTTNYLYWFK.

A signal peptide spans 1–21 (MIMNSAVSLVILLSLLCEAHT). A propeptide spanning residues 22–60 (VVLLNPTDSSLPANNFTDTEAALSTPLESADIPKARRKR) is cleaved from the precursor. N36 and N124 each carry an N-linked (GlcNAc...) asparagine glycan. In terms of domain architecture, SCP spans 71 to 211 (LDYHNQVRGK…RRAVYLVCNY (141 aa)).

This sequence belongs to the CRISP family. In terms of processing, N-glycosylated. Weakly expressed. Expressed at low level in prostate, mammary gland, salivary gland and thyroid gland.

It localises to the secreted. In terms of biological role, serine protease inhibitor which displays weak inhibitory activity against trypsin. May play a role in facial patterning during embryonic development. This Mus musculus (Mouse) protein is Peptidase inhibitor 15 (Pi15).